Consider the following 351-residue polypeptide: Thiamine-phosphate synthase (351 aa).

The unknown stretch occupies residues 1-129 (MVEPYSQQKQ…GQACKQMRYR (129 aa)). A thiamine-phosphate synthase region spans residues 130-351 (VYSLETNLMG…SQLNRIKPES (222 aa)). Residues 177 to 181 (QYRDK) and Asn-209 each bind 4-amino-2-methyl-5-(diphosphooxymethyl)pyrimidine. Mg(2+)-binding residues include Asp-210 and Asp-229. Ser-248 is a 4-amino-2-methyl-5-(diphosphooxymethyl)pyrimidine binding site. Residue 274 to 276 (TPT) participates in 2-[(2R,5Z)-2-carboxy-4-methylthiazol-5(2H)-ylidene]ethyl phosphate binding. Residue Lys-277 coordinates 4-amino-2-methyl-5-(diphosphooxymethyl)pyrimidine. 2-[(2R,5Z)-2-carboxy-4-methylthiazol-5(2H)-ylidene]ethyl phosphate is bound at residue Gly-304.

It belongs to the thiamine-phosphate synthase family. Mg(2+) is required as a cofactor.

It carries out the reaction 2-[(2R,5Z)-2-carboxy-4-methylthiazol-5(2H)-ylidene]ethyl phosphate + 4-amino-2-methyl-5-(diphosphooxymethyl)pyrimidine + 2 H(+) = thiamine phosphate + CO2 + diphosphate. The catalysed reaction is 2-(2-carboxy-4-methylthiazol-5-yl)ethyl phosphate + 4-amino-2-methyl-5-(diphosphooxymethyl)pyrimidine + 2 H(+) = thiamine phosphate + CO2 + diphosphate. The enzyme catalyses 4-methyl-5-(2-phosphooxyethyl)-thiazole + 4-amino-2-methyl-5-(diphosphooxymethyl)pyrimidine + H(+) = thiamine phosphate + diphosphate. Its pathway is cofactor biosynthesis; thiamine diphosphate biosynthesis; thiamine phosphate from 4-amino-2-methyl-5-diphosphomethylpyrimidine and 4-methyl-5-(2-phosphoethyl)-thiazole: step 1/1. In terms of biological role, condenses 4-methyl-5-(beta-hydroxyethyl)thiazole monophosphate (THZ-P) and 2-methyl-4-amino-5-hydroxymethyl pyrimidine pyrophosphate (HMP-PP) to form thiamine monophosphate (TMP). The chain is Thiamine-phosphate synthase from Nostoc sp. (strain PCC 7120 / SAG 25.82 / UTEX 2576).